Consider the following 154-residue polypeptide: Protein X (154 aa).

Residues Pro-68–Phe-117 form a mitochondrial targeting sequence region.

It belongs to the orthohepadnavirus protein X family. In terms of assembly, may form homodimer. May interact with host CEBPA, CFLAR, CREB1, DDB1, E4F1, HBXIP, HSPD1/HSP60, NFKBIA, POLR2E and SMAD4. Interacts with host SMC5-SMC6 complex and induces its degradation. Interacts with host TRPC4AP; leading to prevent ubiquitination of TRPC4AP. Interacts with host PLSCR1; this interaction promotes ubiquitination and degradation of HBx and impairs HBx-mediated cell proliferation. In terms of processing, a fraction may be phosphorylated in insect cells and HepG2 cells, a human hepatoblastoma cell line. Phosphorylated in vitro by host protein kinase C or mitogen-activated protein kinase. N-acetylated in insect cells.

It localises to the host cytoplasm. Its subcellular location is the host nucleus. It is found in the host mitochondrion. Its function is as follows. Multifunctional protein that plays a role in silencing host antiviral defenses and promoting viral transcription. Does not seem to be essential for HBV infection. May be directly involved in development of cirrhosis and liver cancer (hepatocellular carcinoma). Most of cytosolic activities involve modulation of cytosolic calcium. The effect on apoptosis is controversial depending on the cell types in which the studies have been conducted. May induce apoptosis by localizing in mitochondria and causing loss of mitochondrial membrane potential. May also modulate apoptosis by binding host CFLAR, a key regulator of the death-inducing signaling complex (DISC). Promotes viral transcription by using the host E3 ubiquitin ligase DDB1 to target the SMC5-SMC6 complex to proteasomal degradation. This host complex would otherwise bind to viral episomal DNA, and prevents its transcription. Moderately stimulates transcription of many different viral and cellular transcription elements. Promoters and enhancers stimulated by HBx contain DNA binding sites for NF-kappa-B, AP-1, AP-2, c-EBP, ATF/CREB, or the calcium-activated factor NF-AT. The chain is Protein X from Homo sapiens (Human).